A 187-amino-acid chain; its full sequence is Ribosome maturation factor RimM (187 aa).

The PRC barrel domain occupies aspartate 94–leucine 168. Residues glycine 167–aspartate 187 form a disordered region.

This sequence belongs to the RimM family. In terms of assembly, binds ribosomal protein uS19.

The protein localises to the cytoplasm. Functionally, an accessory protein needed during the final step in the assembly of 30S ribosomal subunit, possibly for assembly of the head region. Essential for efficient processing of 16S rRNA. May be needed both before and after RbfA during the maturation of 16S rRNA. It has affinity for free ribosomal 30S subunits but not for 70S ribosomes. The protein is Ribosome maturation factor RimM of Jannaschia sp. (strain CCS1).